A 1239-amino-acid chain; its full sequence is Protein strawberry notch homolog 1 (1239 aa).

Positions Ala-684–Phe-837 are disordered. Residues Ser-694–Ala-713 are compositionally biased toward basic and acidic residues. The segment covering Asp-728–Asn-744 has biased composition (acidic residues). A compositionally biased stretch (basic residues) spans Lys-778–Lys-790. Residues Phe-814–Phe-837 show a composition bias toward low complexity. Residues Val-838–Pro-866 are a coiled coil.

This sequence belongs to the SBNO family.

The protein resides in the nucleus. Its function is as follows. Plays a crucial role in the regulation of neural stem cells (NSCs) proliferation. Enhances the phosphorylation of GSK3B through the PI3K-Akt signaling pathway, thereby upregulating the Wnt/beta-catenin signaling pathway and promoting the proliferation of NSCs. This is Protein strawberry notch homolog 1 (SBNO1) from Gallus gallus (Chicken).